Consider the following 284-residue polypeptide: RNase adapter protein RapZ (284 aa).

8–15 (GRSGSGKS) is an ATP binding site. 56–59 (DVRN) is a GTP binding site. Residues 266–284 (RSRGKNVQSRHRTLEKRKP) form an RNA-binding region.

This sequence belongs to the RapZ-like family. RapZ subfamily. As to quaternary structure, homotrimer.

In terms of biological role, modulates the synthesis of GlmS, by affecting the processing and stability of the regulatory small RNA GlmZ. When glucosamine-6-phosphate (GlcN6P) concentrations are high in the cell, RapZ binds GlmZ and targets it to cleavage by RNase E. Consequently, GlmZ is inactivated and unable to activate GlmS synthesis. Under low GlcN6P concentrations, RapZ is sequestered and inactivated by an other regulatory small RNA, GlmY, preventing GlmZ degradation and leading to synthesis of GlmS. In Escherichia coli O1:K1 / APEC, this protein is RNase adapter protein RapZ.